The primary structure comprises 491 residues: Large ribosomal subunit protein mL101 (rPPR4) (491 aa).

8 PPR repeats span residues 122 to 156 (TELTYGSLLNCYCKELLTEKAEGLLNKMKELNITP), 157 to 191 (SSMSYNSLMTLYTKTGETEKVPAMIQELKAENVMP), 192 to 226 (DSYTYNVWMRALAATNDISGVERVIEEMNRDGRVA), 228 to 262 (DWTTYSNMASIYVDAGLSQKAEKALQELEMKNTQR), 263 to 293 (DFTAYQFLITLYGRLGKLTEVYRIWRSLRLA), 298 to 328 (SNVAYLNMIQVLVKLNDLPGAETLFKEWQAN), 333 to 367 (DIRIVNVLIGAYAQEGLIQKANELKEKAPRRGGKL), and 368 to 402 (NAKTWEIFMDYYVKSGDMARALECMSKAVSIGKGD).

The protein belongs to the PPR family. P subfamily. In terms of assembly, component of the mitochondrial ribosome large subunit.

Its subcellular location is the mitochondrion. The sequence is that of Large ribosomal subunit protein mL101 (rPPR4) from Arabidopsis thaliana (Mouse-ear cress).